A 339-amino-acid polypeptide reads, in one-letter code: Methylthioribose-1-phosphate isomerase (339 aa).

Residues 49-51, arginine 86, and glutamine 187 contribute to the substrate site; that span reads RGA. The Proton donor role is filled by aspartate 228. A substrate-binding site is contributed by 238-239; the sequence is NK.

This sequence belongs to the eIF-2B alpha/beta/delta subunits family. MtnA subfamily.

The enzyme catalyses 5-(methylsulfanyl)-alpha-D-ribose 1-phosphate = 5-(methylsulfanyl)-D-ribulose 1-phosphate. The protein operates within amino-acid biosynthesis; L-methionine biosynthesis via salvage pathway; L-methionine from S-methyl-5-thio-alpha-D-ribose 1-phosphate: step 1/6. In terms of biological role, catalyzes the interconversion of methylthioribose-1-phosphate (MTR-1-P) into methylthioribulose-1-phosphate (MTRu-1-P). The polypeptide is Methylthioribose-1-phosphate isomerase (Cronobacter sakazakii (strain ATCC BAA-894) (Enterobacter sakazakii)).